A 342-amino-acid polypeptide reads, in one-letter code: 4-hydroxy-2-oxovalerate aldolase (342 aa).

Residues 7-257 form the Pyruvate carboxyltransferase domain; the sequence is VWITEVALRD…KTGIDLYKMM (251 aa). 15–16 contacts substrate; the sequence is RD. Asp16 is a binding site for Mn(2+). His19 serves as the catalytic Proton acceptor. Positions 169 and 196 each coordinate substrate. Positions 196 and 198 each coordinate Mn(2+). Tyr287 serves as a coordination point for substrate.

This sequence belongs to the 4-hydroxy-2-oxovalerate aldolase family.

The catalysed reaction is (S)-4-hydroxy-2-oxopentanoate = acetaldehyde + pyruvate. The polypeptide is 4-hydroxy-2-oxovalerate aldolase (pheE) (Geobacillus stearothermophilus (Bacillus stearothermophilus)).